The primary structure comprises 57 residues: Small hydrophobic protein (57 aa).

The Virion surface portion of the chain corresponds to 1–8; it reads MPAIQPPL. Residues 9–29 form a helical membrane-spanning segment; sequence YLTFLLLILLYLIITLYVWTI. At 30–57 the chain is on the intravirion side; it reads LTITYKTTVRYAALYQRSFSRWGFDQSL.

The protein belongs to the rubulavirus small hydrophobic protein family. In terms of assembly, interacts with host TNFRSF1A, RIPK1 and IRAK1; these interactions interfere with host NF-kappa-B activation at the level of receptor complexes. Interacts with host protein UBQLN4.

Its subcellular location is the virion membrane. The protein resides in the host cell membrane. Plays a role in the inhibition of the host NF-kappa-B pathway. This inhibition occurs at the receptor level, by preventing the signaling of TNFR1 as well as IL-1R and TLR3. This Homo sapiens (Human) protein is Small hydrophobic protein (SH).